A 307-amino-acid polypeptide reads, in one-letter code: Pantothenate kinase (307 aa).

Residue 87–94 coordinates ATP; it reads GSVAVGKS.

Belongs to the prokaryotic pantothenate kinase family.

The protein localises to the cytoplasm. The enzyme catalyses (R)-pantothenate + ATP = (R)-4'-phosphopantothenate + ADP + H(+). It participates in cofactor biosynthesis; coenzyme A biosynthesis; CoA from (R)-pantothenate: step 1/5. This is Pantothenate kinase from Vibrio vulnificus (strain YJ016).